A 104-amino-acid chain; its full sequence is Pyrimidine/purine nucleoside phosphorylase (104 aa).

Belongs to the nucleoside phosphorylase PpnP family.

It carries out the reaction a purine D-ribonucleoside + phosphate = a purine nucleobase + alpha-D-ribose 1-phosphate. The catalysed reaction is adenosine + phosphate = alpha-D-ribose 1-phosphate + adenine. The enzyme catalyses cytidine + phosphate = cytosine + alpha-D-ribose 1-phosphate. It catalyses the reaction guanosine + phosphate = alpha-D-ribose 1-phosphate + guanine. It carries out the reaction inosine + phosphate = alpha-D-ribose 1-phosphate + hypoxanthine. The catalysed reaction is thymidine + phosphate = 2-deoxy-alpha-D-ribose 1-phosphate + thymine. The enzyme catalyses uridine + phosphate = alpha-D-ribose 1-phosphate + uracil. It catalyses the reaction xanthosine + phosphate = alpha-D-ribose 1-phosphate + xanthine. Functionally, catalyzes the phosphorolysis of diverse nucleosides, yielding D-ribose 1-phosphate and the respective free bases. Can use uridine, adenosine, guanosine, cytidine, thymidine, inosine and xanthosine as substrates. Also catalyzes the reverse reactions. In Syntrophotalea carbinolica (strain DSM 2380 / NBRC 103641 / GraBd1) (Pelobacter carbinolicus), this protein is Pyrimidine/purine nucleoside phosphorylase.